The chain runs to 922 residues: Ubiquitin carboxyl-terminal hydrolase 29 (922 aa).

Residues 160-196 (GILENQGGKGQNTLSSDVQTNEDILKEDNPVPNKKYK) form a disordered region. Residues 170–181 (QNTLSSDVQTNE) show a composition bias toward polar residues. The USP domain occupies 285 to 885 (QGFPNLGNTC…SGYIFFYMHN (601 aa)). The Nucleophile role is filled by Cys294. His840 (proton acceptor) is an active-site residue.

Belongs to the peptidase C19 family.

The protein resides in the cytoplasm. It localises to the perinuclear region. It catalyses the reaction Thiol-dependent hydrolysis of ester, thioester, amide, peptide and isopeptide bonds formed by the C-terminal Gly of ubiquitin (a 76-residue protein attached to proteins as an intracellular targeting signal).. Functionally, deubiquitinase involved in innate antiviral immunity by mediating 'Lys-48'-linked deubiquitination of CGAS, thereby promoting its stabilization. The protein is Ubiquitin carboxyl-terminal hydrolase 29 of Homo sapiens (Human).